A 1259-amino-acid chain; its full sequence is Cingulin (1259 aa).

Positions 9-324 (MADQPIPVGQ…EKFPSLQAQP (316 aa)) are head. The ZIM signature appears at 41–55 (QDSYGVAVRVQGIDG). Positions 69 to 79 (SSYDYDRHYSE) are enriched in basic and acidic residues. 5 disordered regions span residues 69–151 (SSYD…IDTK), 169–232 (VRGR…RQSL), 317–338 (FPSL…KKEL), 941–969 (KSRR…NSSR), and 1192–1259 (REME…TSSC). Positions 80–100 (RSSTLDTAYSQSSRESAWSRG) are enriched in polar residues. The span at 117 to 127 (SATSQQSTSAS) shows a compositional bias: low complexity. Residues 128–145 (NKTNKNGLSTSSFSNQSS) are compositionally biased toward polar residues. Basic and acidic residues predominate over residues 179–204 (ALKDERKRSQSLDGRKNYQDTADSRE). Over residues 220–229 (VSSANRSFAR) the composition is skewed to polar residues. A coiled-coil region spans residues 325–1218 (GEDTRSLGSQ…KTMEKESKRK (894 aa)). Basic and acidic residues predominate over residues 326-338 (EDTRSLGSQKKEL). A tail region spans residues 1220-1259 (IRPAHNDDDDLSSDGEYGGSYDPSSITSLLTESNLQTSSC). Over residues 1241–1259 (DPSSITSLLTESNLQTSSC) the composition is skewed to polar residues.

This sequence belongs to the cingulin family. In terms of assembly, parallel homodimer. Interacts with TJP1/ZO1 and TJP2/ZO2.

It is found in the cell junction. Its subcellular location is the tight junction. Probably plays a role in the formation and regulation of the tight junction (TJ) paracellular permeability barrier, possibly by linking ZO proteins to the actomyosin cytoskeleton. The polypeptide is Cingulin (Xenopus tropicalis (Western clawed frog)).